The sequence spans 394 residues: Aromatic-amino-acid aminotransferase (394 aa).

Substrate is bound by residues Gly34, Tyr65, Trp127, and Asn180. Lys243 carries the N6-(pyridoxal phosphate)lysine modification. Position 371 (Arg371) interacts with substrate.

The protein belongs to the class-I pyridoxal-phosphate-dependent aminotransferase family. As to quaternary structure, homodimer. The cofactor is pyridoxal 5'-phosphate.

The protein resides in the cytoplasm. It carries out the reaction an aromatic L-alpha-amino acid + 2-oxoglutarate = an aromatic oxo-acid + L-glutamate. Shows activities toward both dicarboxylic and aromatic substrates. In Paracoccus denitrificans, this protein is Aromatic-amino-acid aminotransferase (tyrB).